Consider the following 27-residue polypeptide: Larval-specific very high density lipoprotein (27 aa).

In terms of assembly, homodimer. As to expression, hemolymph.

It is found in the secreted. Its subcellular location is the extracellular space. Functionally, unknown (it might play a role in lipid transport and/or storage protein metabolism during metamorphosis). The sequence is that of Larval-specific very high density lipoprotein from Apis mellifera (Honeybee).